Reading from the N-terminus, the 360-residue chain is Photosystem II protein D1 (360 aa).

Helical transmembrane passes span 29 to 46 (YIGW…TAAS), 118 to 133 (HFLI…EWEL), and 142 to 156 (WIFV…AASA). Chlorophyll a is bound at residue H118. Pheophytin a is bound at residue W126. 2 residues coordinate [CaMn4O5] cluster: D170 and E189. The chain crosses the membrane as a helical span at residues 197-218 (FHMAGVAGVFGGSLFSAMHGSL). H198 contributes to the chlorophyll a binding site. A quinone-binding positions include H215 and 264 to 265 (SF). H215 serves as a coordination point for Fe cation. H272 is a Fe cation binding site. A helical transmembrane segment spans residues 274 to 288 (FLAAWPVVGIWLTAL). 4 residues coordinate [CaMn4O5] cluster: H332, E333, D342, and A344. The propeptide occupies 345-360 (SNEILPVAISAPSVVG).

This sequence belongs to the reaction center PufL/M/PsbA/D family. PSII is composed of 1 copy each of membrane proteins PsbA, PsbB, PsbC, PsbD, PsbE, PsbF, PsbH, PsbI, PsbJ, PsbK, PsbL, PsbM, PsbT, PsbX, PsbY, PsbZ, Psb30/Ycf12, at least 3 peripheral proteins of the oxygen-evolving complex and a large number of cofactors. It forms dimeric complexes. It depends on The D1/D2 heterodimer binds P680, chlorophylls that are the primary electron donor of PSII, and subsequent electron acceptors. It shares a non-heme iron and each subunit binds pheophytin, quinone, additional chlorophylls, carotenoids and lipids. D1 provides most of the ligands for the Mn4-Ca-O5 cluster of the oxygen-evolving complex (OEC). There is also a Cl(-1) ion associated with D1 and D2, which is required for oxygen evolution. The PSII complex binds additional chlorophylls, carotenoids and specific lipids. as a cofactor. Post-translationally, tyr-161 forms a radical intermediate that is referred to as redox-active TyrZ, YZ or Y-Z. In terms of processing, C-terminally processed by CTPA; processing is essential to allow assembly of the oxygen-evolving complex and thus photosynthetic growth.

The protein resides in the plastid. The protein localises to the chloroplast thylakoid membrane. The catalysed reaction is 2 a plastoquinone + 4 hnu + 2 H2O = 2 a plastoquinol + O2. Photosystem II (PSII) is a light-driven water:plastoquinone oxidoreductase that uses light energy to abstract electrons from H(2)O, generating O(2) and a proton gradient subsequently used for ATP formation. It consists of a core antenna complex that captures photons, and an electron transfer chain that converts photonic excitation into a charge separation. The D1/D2 (PsbA/PsbD) reaction center heterodimer binds P680, the primary electron donor of PSII as well as several subsequent electron acceptors. This chain is Photosystem II protein D1, found in Ectocarpus siliculosus (Brown alga).